The chain runs to 497 residues: uncharacterized protein (497 aa).

Helical transmembrane passes span 91-111, 119-139, 149-169, 179-199, 215-235, 283-303, 319-339, 347-367, 374-394, 406-426, and 439-459; these read WVGT…STLL, VTSA…LVHS, LLGI…AQWY, AFLV…SYGL, ILFI…FIHI, MYLY…LSNF, LLMN…FGLI, MDIA…IAFA, LAGY…LSCI, FMSA…PQTF, and VSFV…YAVN.

This sequence belongs to the major facilitator superfamily. Allantoate permease family.

The protein localises to the golgi apparatus. Its subcellular location is the membrane. This is an uncharacterized protein from Schizosaccharomyces pombe (strain 972 / ATCC 24843) (Fission yeast).